A 100-amino-acid polypeptide reads, in one-letter code: Integration host factor subunit alpha (100 aa).

The protein belongs to the bacterial histone-like protein family. As to quaternary structure, heterodimer of an alpha and a beta chain.

This protein is one of the two subunits of integration host factor, a specific DNA-binding protein that functions in genetic recombination as well as in transcriptional and translational control. The polypeptide is Integration host factor subunit alpha (Ruegeria sp. (strain TM1040) (Silicibacter sp.)).